The sequence spans 218 residues: Phosphoribosylformylglycinamidine synthase subunit PurQ (218 aa).

The 217-residue stretch at 2 to 218 (SIAVLRFPGT…GARMLRGLAC (217 aa)) folds into the Glutamine amidotransferase type-1 domain. The active-site Nucleophile is cysteine 86. Catalysis depends on residues histidine 195 and glutamate 197.

As to quaternary structure, part of the FGAM synthase complex composed of 1 PurL, 1 PurQ and 2 PurS subunits.

The protein resides in the cytoplasm. The enzyme catalyses N(2)-formyl-N(1)-(5-phospho-beta-D-ribosyl)glycinamide + L-glutamine + ATP + H2O = 2-formamido-N(1)-(5-O-phospho-beta-D-ribosyl)acetamidine + L-glutamate + ADP + phosphate + H(+). The catalysed reaction is L-glutamine + H2O = L-glutamate + NH4(+). It functions in the pathway purine metabolism; IMP biosynthesis via de novo pathway; 5-amino-1-(5-phospho-D-ribosyl)imidazole from N(2)-formyl-N(1)-(5-phospho-D-ribosyl)glycinamide: step 1/2. Part of the phosphoribosylformylglycinamidine synthase complex involved in the purines biosynthetic pathway. Catalyzes the ATP-dependent conversion of formylglycinamide ribonucleotide (FGAR) and glutamine to yield formylglycinamidine ribonucleotide (FGAM) and glutamate. The FGAM synthase complex is composed of three subunits. PurQ produces an ammonia molecule by converting glutamine to glutamate. PurL transfers the ammonia molecule to FGAR to form FGAM in an ATP-dependent manner. PurS interacts with PurQ and PurL and is thought to assist in the transfer of the ammonia molecule from PurQ to PurL. This chain is Phosphoribosylformylglycinamidine synthase subunit PurQ, found in Wolinella succinogenes (strain ATCC 29543 / DSM 1740 / CCUG 13145 / JCM 31913 / LMG 7466 / NCTC 11488 / FDC 602W) (Vibrio succinogenes).